Here is a 573-residue protein sequence, read N- to C-terminus: Ribonuclease J (573 aa).

A disordered region spans residues methionine 1–glutamate 29. The Zn(2+) site is built by histidine 93, histidine 95, aspartate 97, histidine 98, histidine 168, and aspartate 190. Residues alanine 259–histidine 261 and histidine 390–histidine 394 each bind substrate. Zn(2+) is bound at residue histidine 416.

It belongs to the metallo-beta-lactamase superfamily. RNA-metabolizing metallo-beta-lactamase-like family. Bacterial RNase J subfamily. As to quaternary structure, homodimer. May be a subunit of the RNA degradosome. Zn(2+) serves as cofactor.

The protein resides in the cytoplasm. Its function is as follows. An RNase that has endonuclease and possibly 5'-3' exonuclease activity. Probably involved in maturation of rRNA and in some organisms also mRNA maturation and/or decay. The protein is Ribonuclease J of Thermus thermophilus (strain ATCC BAA-163 / DSM 7039 / HB27).